The chain runs to 48 residues: Large ribosomal subunit protein bL34c (48 aa).

This sequence belongs to the bacterial ribosomal protein bL34 family.

It localises to the plastid. It is found in the chloroplast. This Thalassiosira pseudonana (Marine diatom) protein is Large ribosomal subunit protein bL34c.